The primary structure comprises 1038 residues: Subtilisin-like protease SBT6.1 (1038 aa).

The N-terminal stretch at 1–30 is a signal peptide; the sequence is MKVLGEASSYPYRSCIIVVFLSVSLFWLRP. A propeptide spans 31–181 (removed in mature form); sequence STYHPQQQNL…TTLNWSRHLL (151 aa). N-linked (GlcNAc...) asparagine glycans are attached at residues asparagine 44, asparagine 52, asparagine 171, and asparagine 175. Residues 175–473 enclose the Peptidase S8 domain; the sequence is NWSRHLLAQK…VDLLESYEIL (299 aa). Topologically, residues 182–1000 are lumenal; sequence AQKTQVTSMF…IDMPFLVPTR (819 aa). Catalysis depends on aspartate 212, which acts as the Charge relay system. N-linked (GlcNAc...) asparagine glycosylation is present at asparagine 230. Histidine 243 functions as the Charge relay system in the catalytic mechanism. A glycan (N-linked (GlcNAc...) asparagine) is linked at asparagine 300. The Charge relay system role is filled by serine 409. 4 N-linked (GlcNAc...) asparagine glycosylation sites follow: asparagine 513, asparagine 579, asparagine 902, and asparagine 954. Residues 1001 to 1021 form a helical membrane-spanning segment; the sequence is WIVLAGVVASGVLVLLSIWRI. The Cytoplasmic segment spans residues 1022 to 1038; sequence RQKRGRRRRASGSNRLA.

It belongs to the peptidase S8 family. Interacts with PME1 and PME5. In terms of tissue distribution, expressed in the vasculature of roots, cotyledons and leaves.

Its subcellular location is the golgi apparatus membrane. In terms of biological role, serine protease that catalyzes the first step (site-1 cleavage) in the proteolytic activation of various factors, prior to site-2 cleavage. Part of a regulated intramembrane proteolysis (RIP) cascade. Cleaves BZIP17 and BZIP28 after the Arg-Arg-Ile-Leu (RRIL) motif. May cleave BZIP49 after the RRIL motif. Targets the membrane-associated BZIP17 factor, which functions as a stress sensor and transducer in a signaling pathway that resembles an ER stress response. Following salt stress, BZIP17 is cleaved by SBT6.1 (S1P) and S2P at the C-terminus and the N-terminal bZIP component is translocated to the nucleus, where it activates the expression of salt stress response genes. Cleaves the pectinesterases PME1 after the Arg-Arg-Leu-Met (RRLM) and Arg-Arg-Leu-Leu (RRLL) motifs, and PME5 after the Arg-Arg-Leu-Leu (RRLL) and Arg-Lys-Leu-Met (RKLM) motifs. This processing and C-terminus release occurs in the Golgi apparatus and is required for cell wall targeting of pectinesterases. Thus, SBT6.1 mediates the regulated release of mature pectinesterases from the Golgi. Cleaves the peptide growth factor RALF23 after the Arg-Arg-Ile-Leu (RRIL) motif. This processing is required for RALF23 function in the negative regulation of brassinolide (BL)-mediated signaling pathway (e.g. BL-induced hypocotyl elongation and branching limitation). This is Subtilisin-like protease SBT6.1 from Arabidopsis thaliana (Mouse-ear cress).